Here is a 239-residue protein sequence, read N- to C-terminus: UDP-2,3-diacylglucosamine hydrolase (239 aa).

Aspartate 8, histidine 10, aspartate 41, asparagine 79, and histidine 114 together coordinate Mn(2+). Position 79–80 (79–80 (NR)) interacts with substrate. Substrate is bound by residues aspartate 122, serine 160, asparagine 164, lysine 167, and histidine 195. Mn(2+)-binding residues include histidine 195 and histidine 197.

It belongs to the LpxH family. Mn(2+) serves as cofactor.

Its subcellular location is the cell inner membrane. The catalysed reaction is UDP-2-N,3-O-bis[(3R)-3-hydroxytetradecanoyl]-alpha-D-glucosamine + H2O = 2-N,3-O-bis[(3R)-3-hydroxytetradecanoyl]-alpha-D-glucosaminyl 1-phosphate + UMP + 2 H(+). It functions in the pathway glycolipid biosynthesis; lipid IV(A) biosynthesis; lipid IV(A) from (3R)-3-hydroxytetradecanoyl-[acyl-carrier-protein] and UDP-N-acetyl-alpha-D-glucosamine: step 4/6. In terms of biological role, hydrolyzes the pyrophosphate bond of UDP-2,3-diacylglucosamine to yield 2,3-diacylglucosamine 1-phosphate (lipid X) and UMP by catalyzing the attack of water at the alpha-P atom. Involved in the biosynthesis of lipid A, a phosphorylated glycolipid that anchors the lipopolysaccharide to the outer membrane of the cell. The chain is UDP-2,3-diacylglucosamine hydrolase from Sodalis glossinidius (strain morsitans).